The primary structure comprises 486 residues: Malonate-semialdehyde dehydrogenase (486 aa).

Positions 154, 178, 181, 182, and 231 each coordinate NAD(+). Cys-286 serves as the catalytic Nucleophile. Residue Glu-386 coordinates NAD(+).

This sequence belongs to the aldehyde dehydrogenase family. IolA subfamily. Homotetramer.

The enzyme catalyses 3-oxopropanoate + NAD(+) + CoA + H2O = hydrogencarbonate + acetyl-CoA + NADH + H(+). It carries out the reaction 2-methyl-3-oxopropanoate + NAD(+) + CoA + H2O = propanoyl-CoA + hydrogencarbonate + NADH + H(+). Its pathway is polyol metabolism; myo-inositol degradation into acetyl-CoA; acetyl-CoA from myo-inositol: step 7/7. Catalyzes the oxidation of malonate semialdehyde (MSA) and methylmalonate semialdehyde (MMSA) into acetyl-CoA and propanoyl-CoA, respectively. Is involved in a myo-inositol catabolic pathway. Bicarbonate, and not CO2, is the end-product of the enzymatic reaction. This is Malonate-semialdehyde dehydrogenase from Bacillus cytotoxicus (strain DSM 22905 / CIP 110041 / 391-98 / NVH 391-98).